Reading from the N-terminus, the 144-residue chain is Large ribosomal subunit protein uL14 (144 aa).

Residues 107–144 form a disordered region; it reads NEGYTHSQHSNQREGGERIQAQPSPPHARRAVKTSFCR.

The protein belongs to the universal ribosomal protein uL14 family. In terms of assembly, part of the 50S ribosomal subunit. Forms a cluster with proteins L3 and L19. In the 70S ribosome, L14 and L19 interact and together make contacts with the 16S rRNA in bridges B5 and B8.

Binds to 23S rRNA. Forms part of two intersubunit bridges in the 70S ribosome. This Xanthobacter autotrophicus (strain ATCC BAA-1158 / Py2) protein is Large ribosomal subunit protein uL14.